The primary structure comprises 248 residues: Large ribosomal subunit protein uL30 (248 aa).

M1 is modified (N-acetylmethionine). 4 tandem repeats follow at residues 7–18 (KKKEVPAVPETL), 19–30 (KKKRRNFAELKI), 31–42 (KRLRKKFAQKML), and 43–54 (RKARRKLIYEKA). The tract at residues 7 to 54 (KKKEVPAVPETLKKKRRNFAELKIKRLRKKFAQKMLRKARRKLIYEKA) is 4 X 12 AA tandem repeats. The residue at position 17 (T17) is a Phosphothreonine. K124 bears the N6-acetyllysine mark. K127 is subject to N6-succinyllysine. Position 139 is a phosphotyrosine (Y139).

This sequence belongs to the universal ribosomal protein uL30 family. Component of the large ribosomal subunit. Homodimer. Interacts with DHX33.

The protein resides in the cytoplasm. Its function is as follows. Component of the large ribosomal subunit. The ribosome is a large ribonucleoprotein complex responsible for the synthesis of proteins in the cell. Binds to G-rich structures in 28S rRNA and in mRNAs. Plays a regulatory role in the translation apparatus; inhibits cell-free translation of mRNAs. In Homo sapiens (Human), this protein is Large ribosomal subunit protein uL30 (RPL7).